The primary structure comprises 428 residues: tRNA(Ile)-lysidine synthase (428 aa).

28 to 33 (SGGVDS) is a binding site for ATP.

The protein belongs to the tRNA(Ile)-lysidine synthase family.

The protein resides in the cytoplasm. The catalysed reaction is cytidine(34) in tRNA(Ile2) + L-lysine + ATP = lysidine(34) in tRNA(Ile2) + AMP + diphosphate + H(+). In terms of biological role, ligates lysine onto the cytidine present at position 34 of the AUA codon-specific tRNA(Ile) that contains the anticodon CAU, in an ATP-dependent manner. Cytidine is converted to lysidine, thus changing the amino acid specificity of the tRNA from methionine to isoleucine. The sequence is that of tRNA(Ile)-lysidine synthase from Streptococcus pyogenes serotype M18 (strain MGAS8232).